A 429-amino-acid chain; its full sequence is BURP domain-containing protein 3 (429 aa).

An N-terminal signal peptide occupies residues 1 to 21 (MDRLLACLLGFLLIASVGSHA). A disordered region spans residues 59–81 (GGGVHVDAGHGKPGGTTVDVGKG). The BURP domain maps to 213 to 428 (FFLEKDLHPG…PQDHVVWTRS (216 aa)).

Expressed in stems, leaves, shoot, panicles and stamen.

This Oryza sativa subsp. japonica (Rice) protein is BURP domain-containing protein 3 (BURP3).